The primary structure comprises 456 residues: MSKIVSINAYEVLDSRGNPTVKVELTTEKAYAEALVPSGASTGSKEALELRDKGTKYEKNWFGGKGVQTAVDNVNEIIFPALKGKDVTKQFEIDKLMIELDGTETKSKLGANAILAVSLAVAKAAANEANVPLYAYLAKLDNRQAYKLPVPMLNVINGGEHASNTIDFQEFMIMPLGAKTFKEAMQIANFVFHTLAKLLKEAGHGTQVGDEGGFAPNLHTHEETLDFLVNAIKKAGYNPATSGDNAVAICLDTASSELYCSESKTYTFKKFKKALDEKRPGFEKYASMKYKFTSDEYVEYYGNLIAKYPIISIEDSHDENDWEGFRKMKKLYGNRVQLVGDDLIVTNPKYIKMAIEKDAINASLIKINQIGSLWETIEAIKMTQAANMVPVISHRSGETEDTFIADLAVAFNTGEIKTGSLSRTDRIAKYNRLLKIEQELGNKAKYEGRASFSNLK.

Gln169 contacts (2R)-2-phosphoglycerate. Glu211 serves as the catalytic Proton donor. Mg(2+) is bound by residues Asp252, Glu314, and Asp341. Residues Lys366, Arg395, Ser396, and Lys417 each contribute to the (2R)-2-phosphoglycerate site. The active-site Proton acceptor is Lys366.

It belongs to the enolase family. It depends on Mg(2+) as a cofactor.

It is found in the cytoplasm. The protein localises to the secreted. Its subcellular location is the cell surface. The catalysed reaction is (2R)-2-phosphoglycerate = phosphoenolpyruvate + H2O. It participates in carbohydrate degradation; glycolysis; pyruvate from D-glyceraldehyde 3-phosphate: step 4/5. Functionally, catalyzes the reversible conversion of 2-phosphoglycerate (2-PG) into phosphoenolpyruvate (PEP). It is essential for the degradation of carbohydrates via glycolysis. The polypeptide is Enolase (Metamycoplasma arthritidis (strain 158L3-1) (Mycoplasma arthritidis)).